Consider the following 268-residue polypeptide: Cytochrome c oxidase subunit 3 (268 aa).

7 helical membrane passes run 23–43 (ILVSFSVMSIMLTLVFNMHGF), 49–69 (WVVFSAIVAIMTMALWFRDII), 88–108 (IGFILFVVSELFFFIAIFWAF), 141–161 (TILLLCSGATLTWSHHALLGG), 166–186 (TLLGLILTIALAVTFMICQYM), 203–223 (VFYFGTGFHGLHIIIGIIMLG), and 246–266 (ILYYHFVDVVWLFLYIVFYWW).

This sequence belongs to the cytochrome c oxidase subunit 3 family. In terms of assembly, component of the cytochrome c oxidase (complex IV, CIV), a multisubunit enzyme composed of a catalytic core of 3 subunits and several supernumerary subunits. The complex exists as a monomer or a dimer and forms supercomplexes (SCs) in the inner mitochondrial membrane with ubiquinol-cytochrome c oxidoreductase (cytochrome b-c1 complex, complex III, CIII).

The protein resides in the mitochondrion inner membrane. It catalyses the reaction 4 Fe(II)-[cytochrome c] + O2 + 8 H(+)(in) = 4 Fe(III)-[cytochrome c] + 2 H2O + 4 H(+)(out). Its function is as follows. Component of the cytochrome c oxidase, the last enzyme in the mitochondrial electron transport chain which drives oxidative phosphorylation. The respiratory chain contains 3 multisubunit complexes succinate dehydrogenase (complex II, CII), ubiquinol-cytochrome c oxidoreductase (cytochrome b-c1 complex, complex III, CIII) and cytochrome c oxidase (complex IV, CIV), that cooperate to transfer electrons derived from NADH and succinate to molecular oxygen, creating an electrochemical gradient over the inner membrane that drives transmembrane transport and the ATP synthase. Cytochrome c oxidase is the component of the respiratory chain that catalyzes the reduction of oxygen to water. Electrons originating from reduced cytochrome c in the intermembrane space (IMS) are transferred via the dinuclear copper A center (CU(A)) of subunit 2 and heme A of subunit 1 to the active site in subunit 1, a binuclear center (BNC) formed by heme A3 and copper B (CU(B)). The BNC reduces molecular oxygen to 2 water molecules using 4 electrons from cytochrome c in the IMS and 4 protons from the mitochondrial matrix. The protein is Cytochrome c oxidase subunit 3 (COX3) of Yarrowia lipolytica (strain CLIB 122 / E 150) (Yeast).